The chain runs to 964 residues: Lon protease homolog, mitochondrial (964 aa).

Residues 89 to 300 (VIALPLPHRP…LTLELVKKEM (212 aa)) enclose the Lon N-terminal domain. 455–462 (GPPGVGKT) contributes to the ATP binding site. The segment at 663–740 (GVSNEPDHES…TSKGNKGTDG (78 aa)) is disordered. Polar residues predominate over residues 673–687 (VSASVTEESGNGDNT). Positions 688 to 698 (TTKDEILKDPA) are enriched in basic and acidic residues. Residues 703-712 (SVTNNVTNPA) are compositionally biased toward polar residues. One can recognise a Lon proteolytic domain in the interval 773–957 (HTPVGVVMGL…SEIYDLAFQS (185 aa)). Residues Ser863 and Lys906 contribute to the active site.

The protein belongs to the peptidase S16 family. In terms of assembly, homoheptamer. Organized in a ring with a central cavity.

The protein localises to the mitochondrion matrix. The catalysed reaction is Hydrolysis of proteins in presence of ATP.. In terms of biological role, ATP-dependent serine protease that mediates the selective degradation of misfolded, unassembled or oxidatively damaged polypeptides as well as certain short-lived regulatory proteins in the mitochondrial matrix. May also have a chaperone function in the assembly of inner membrane protein complexes. Participates in the regulation of mitochondrial gene expression and in the maintenance of the integrity of the mitochondrial genome. Binds to mitochondrial DNA in a site-specific manner. The sequence is that of Lon protease homolog, mitochondrial (LON2) from Zea mays (Maize).